The primary structure comprises 564 residues: Mercuric reductase (564 aa).

The region spanning 1 to 65 (MSTLKITGMT…AVAGLGYRAT (65 aa)) is the HMA domain. A metal cation contacts are provided by C11 and C14. Residues A109, G129, and T134 each contribute to the FAD site. A disulfide bridge connects residues C135 and C140. Positions 144, 210, 406, and 414 each coordinate FAD. Residues C561 and C562 each coordinate Hg(2+).

Belongs to the class-I pyridine nucleotide-disulfide oxidoreductase family. Homodimer. Requires FAD as cofactor.

The catalysed reaction is Hg + NADP(+) + H(+) = Hg(2+) + NADPH. In terms of biological role, resistance to Hg(2+) in bacteria appears to be governed by a specialized system which includes mercuric reductase. MerA protein is responsible for volatilizing mercury as Hg(0). In Shigella flexneri, this protein is Mercuric reductase (merA).